The chain runs to 264 residues: S-adenosylmethionine decarboxylase proenzyme (264 aa).

S113 serves as the catalytic Schiff-base intermediate with substrate; via pyruvic acid. S113 bears the Pyruvic acid (Ser); by autocatalysis mark. Catalysis depends on H118, which acts as the Proton acceptor; for processing activity. C141 acts as the Proton donor; for catalytic activity in catalysis.

The protein belongs to the prokaryotic AdoMetDC family. Type 2 subfamily. In terms of assembly, heterooctamer of four alpha and four beta chains arranged as a tetramer of alpha/beta heterodimers. Pyruvate serves as cofactor. Is synthesized initially as an inactive proenzyme. Formation of the active enzyme involves a self-maturation process in which the active site pyruvoyl group is generated from an internal serine residue via an autocatalytic post-translational modification. Two non-identical subunits are generated from the proenzyme in this reaction, and the pyruvate is formed at the N-terminus of the alpha chain, which is derived from the carboxyl end of the proenzyme. The post-translation cleavage follows an unusual pathway, termed non-hydrolytic serinolysis, in which the side chain hydroxyl group of the serine supplies its oxygen atom to form the C-terminus of the beta chain, while the remainder of the serine residue undergoes an oxidative deamination to produce ammonia and the pyruvoyl group blocking the N-terminus of the alpha chain.

It catalyses the reaction S-adenosyl-L-methionine + H(+) = S-adenosyl 3-(methylsulfanyl)propylamine + CO2. It participates in amine and polyamine biosynthesis; S-adenosylmethioninamine biosynthesis; S-adenosylmethioninamine from S-adenosyl-L-methionine: step 1/1. Catalyzes the decarboxylation of S-adenosylmethionine to S-adenosylmethioninamine (dcAdoMet), the propylamine donor required for the synthesis of the polyamines spermine and spermidine from the diamine putrescine. The sequence is that of S-adenosylmethionine decarboxylase proenzyme from Pseudomonas paraeruginosa (strain DSM 24068 / PA7) (Pseudomonas aeruginosa (strain PA7)).